Here is a 318-residue protein sequence, read N- to C-terminus: Receptor homology region, transmembrane domain- and RING domain-containing protein 6 (318 aa).

Residues 1 to 20 (MNGSWITILSLLVISQLASS) form the signal peptide. At 22-162 (VTLIGKNTFL…LIPGFGISSW (141 aa)) the chain is on the lumenal side. Cysteine 62 and cysteine 87 are joined by a disulfide. The PA domain occupies 70–143 (EKGSKFRPSY…RTSGEVLKEY (74 aa)). N-linked (GlcNAc...) asparagine glycosylation occurs at asparagine 121. Residues 163–183 (SIMAITFVSLLVISAVLASYF) form a helical membrane-spanning segment. Residues 184–318 (SVRRHRIRQH…DLPIVVRVYL (135 aa)) lie on the Cytoplasmic side of the membrane. The segment at 233 to 275 (CAICIDDYRVGEILRILPCKHKYHAVCIDSWLGRCRSFCPVCK) adopts an RING-type; atypical zinc-finger fold.

It localises to the prevacuolar compartment membrane. The protein resides in the protein storage vacuole membrane. Its function is as follows. Involved in the trafficking of vacuolar proteins. May function as a sorting receptor for protein trafficking to the protein storage vacuole (PSV). This Arabidopsis thaliana (Mouse-ear cress) protein is Receptor homology region, transmembrane domain- and RING domain-containing protein 6 (RMR6).